A 307-amino-acid polypeptide reads, in one-letter code: Ribosomal RNA small subunit methyltransferase H (307 aa).

S-adenosyl-L-methionine is bound by residues 34-36 (GGH), Asp54, Phe79, Asp101, and Gln108.

Belongs to the methyltransferase superfamily. RsmH family.

The protein localises to the cytoplasm. The enzyme catalyses cytidine(1402) in 16S rRNA + S-adenosyl-L-methionine = N(4)-methylcytidine(1402) in 16S rRNA + S-adenosyl-L-homocysteine + H(+). In terms of biological role, specifically methylates the N4 position of cytidine in position 1402 (C1402) of 16S rRNA. The protein is Ribosomal RNA small subunit methyltransferase H of Ruthia magnifica subsp. Calyptogena magnifica.